The primary structure comprises 591 residues: Serine/threonine-protein phosphatase PP2A 65 kDa regulatory subunit (591 aa).

At Ala-2 the chain carries N-acetylalanine. HEAT repeat units lie at residues 10–48 (DSLY…GEER), 49–86 (TRSE…GGPE), 87–125 (FAMY…SAQD), 126–163 (LEIH…VTQP), 164–202 (VKAE…ETEY), 203–241 (LKSD…PQDD), 242–280 (VEHL…GPEI), 281–323 (TRVD…QVQI), 324–362 (ILSS…GAYQ), 363–401 (TVEQ…GIQQ), 402–440 (LSQS…GQEF), 441–479 (FDQK…GAPW), 480–518 (AEQA…GTDI), 519–557 (TTKL…EASV), and 558–591 (IDAQ…IAAA).

It belongs to the phosphatase 2A regulatory subunit A family. In terms of assembly, PP2A exists in several trimeric forms, all of which consist of a core composed of a catalytic subunit associated with a 65 kDa regulatory subunit (PR65) (subunit A). The core complex associates with a third, variable subunit (subunit B), which confers distinct properties to the holoenzyme. Interacts with the inorganic phosphate transporter PXo (CG10483). Component of the Integrator-PP2A (INTAC) complex, composed of the Integrator core complex and protein phosphatase 2A subunits mts/PP2A and Pp2A-29B. In terms of tissue distribution, expression varies in tissues throughout development. Highly distributed expression in early embryos. In late embryonal development, found at high levels in nervous system and gonads. In third instar larvae, found in brain, imaginal disks and salivary glands.

It is found in the nucleus. The PR65 subunit of protein phosphatase 2A serves as a scaffolding molecule to coordinate the assembly of the catalytic subunit and a variable regulatory B subunit. Key mediator of a quality checkpoint during transcription elongation as part of the Integrator-PP2A (INTAC) complex. The INTAC complex drives premature transcription termination of transcripts that are unfavorably configured for transcriptional elongation: within the INTAC complex, acts as a scaffolding subunit for mts/PP2A, which catalyzes dephosphorylation of the C-terminal domain (CTD) of Pol II subunit POLR2A/RPB1 and Spt5, thereby preventing transcriptional elongation. The sequence is that of Serine/threonine-protein phosphatase PP2A 65 kDa regulatory subunit (Pp2A-29B) from Drosophila melanogaster (Fruit fly).